The primary structure comprises 81 residues: Putative membrane protein insertion efficiency factor 1 (81 aa).

It belongs to the UPF0161 family.

It is found in the cell membrane. Could be involved in insertion of integral membrane proteins into the membrane. This is Putative membrane protein insertion efficiency factor 1 from Bacillus licheniformis (strain ATCC 14580 / DSM 13 / JCM 2505 / CCUG 7422 / NBRC 12200 / NCIMB 9375 / NCTC 10341 / NRRL NRS-1264 / Gibson 46).